The primary structure comprises 135 residues: Fluoride-specific ion channel FluC 1 (135 aa).

Helical transmembrane passes span 7 to 27 (LAVGSFAFFGGILRYLIGLVL), 32 to 52 (GFPYGTLCVNLIGAFCLPFLM), 65 to 85 (LALAIGTGFFGAFTTFSSFSV), and 96 to 116 (WSAFAWYVGISMVGGVLLSLL). Residues glycine 75 and threonine 78 each contribute to the Na(+) site.

The protein belongs to the fluoride channel Fluc/FEX (TC 1.A.43) family.

The protein resides in the cell membrane. The enzyme catalyses fluoride(in) = fluoride(out). With respect to regulation, na(+) is not transported, but it plays an essential structural role and its presence is essential for fluoride channel function. In terms of biological role, fluoride-specific ion channel. Important for reducing fluoride concentration in the cell, thus reducing its toxicity. This Latilactobacillus sakei subsp. sakei (strain 23K) (Lactobacillus sakei subsp. sakei) protein is Fluoride-specific ion channel FluC 1.